The primary structure comprises 684 residues: Protein-glutamine gamma-glutamyltransferase 4 (684 aa).

Catalysis depends on residues C268, H327, and D350. Residues N390, D392, E442, and E447 each coordinate Ca(2+).

Belongs to the transglutaminase superfamily. Transglutaminase family. Homodimer. The cofactor is Ca(2+). In terms of tissue distribution, prostate.

It catalyses the reaction L-glutaminyl-[protein] + L-lysyl-[protein] = [protein]-L-lysyl-N(6)-5-L-glutamyl-[protein] + NH4(+). Associated with the mammalian reproductive process. Catalyzes the cross-linking of proteins and the conjugation of polyamines to specific proteins in the seminal tract. This Homo sapiens (Human) protein is Protein-glutamine gamma-glutamyltransferase 4 (TGM4).